A 199-amino-acid chain; its full sequence is uncharacterized protein (199 aa).

Residues 7–27 (FWFWLILGIIALFIIVKAIVI) form a helical membrane-spanning segment.

The protein belongs to the band 7/mec-2 family.

The protein resides in the membrane. This is an uncharacterized protein from Methanocaldococcus jannaschii (strain ATCC 43067 / DSM 2661 / JAL-1 / JCM 10045 / NBRC 100440) (Methanococcus jannaschii).